The primary structure comprises 98 residues: Large ribosomal subunit protein uL23 (98 aa).

Belongs to the universal ribosomal protein uL23 family. Part of the 50S ribosomal subunit. Contacts protein L29, and trigger factor when it is bound to the ribosome.

Its function is as follows. One of the early assembly proteins it binds 23S rRNA. One of the proteins that surrounds the polypeptide exit tunnel on the outside of the ribosome. Forms the main docking site for trigger factor binding to the ribosome. In Ruegeria pomeroyi (strain ATCC 700808 / DSM 15171 / DSS-3) (Silicibacter pomeroyi), this protein is Large ribosomal subunit protein uL23.